Consider the following 94-residue polypeptide: Large ribosomal subunit protein eL42 (94 aa).

Zn(2+) contacts are provided by Cys-11, Cys-14, Cys-71, and Cys-74. Residues 11 to 74 form a C4-type zinc finger; it reads CPYCKRHTIH…LDLRFVCTVC (64 aa).

It belongs to the eukaryotic ribosomal protein eL42 family. In terms of assembly, part of the 50S ribosomal subunit. Zn(2+) serves as cofactor.

Functionally, binds to the 23S rRNA. This chain is Large ribosomal subunit protein eL42, found in Pyrococcus horikoshii (strain ATCC 700860 / DSM 12428 / JCM 9974 / NBRC 100139 / OT-3).